The following is a 351-amino-acid chain: Phospho-N-acetylmuramoyl-pentapeptide-transferase (351 aa).

Transmembrane regions (helical) follow at residues 17–37 (MAYATIFAFLLSLIIGPHIIL), 62–82 (GIPTMGGILIFFCVFISLVFW), 85–105 (ILNVYFLIMLFVMLGFAFLGF), 124–144 (FKIYGQIIFSFISVGTLYYFG), 161–181 (IDLGLFYIPFGMFILISASNS), 190–210 (GLAIGLSIVITGALIIIAYLT), 230–250 (LVIFLGALLGGSFGFLWFNAY), 254–274 (IMMGDTGSLALGAILGMAALI), 279–299 (ILFSILAGVFIIETMSVIIQV), and 328–348 (QVVIRFWIIGLIFAIIALSTI).

This sequence belongs to the glycosyltransferase 4 family. MraY subfamily. Requires Mg(2+) as cofactor.

It is found in the cell inner membrane. The enzyme catalyses UDP-N-acetyl-alpha-D-muramoyl-L-alanyl-gamma-D-glutamyl-meso-2,6-diaminopimeloyl-D-alanyl-D-alanine + di-trans,octa-cis-undecaprenyl phosphate = di-trans,octa-cis-undecaprenyl diphospho-N-acetyl-alpha-D-muramoyl-L-alanyl-D-glutamyl-meso-2,6-diaminopimeloyl-D-alanyl-D-alanine + UMP. Its pathway is cell wall biogenesis; peptidoglycan biosynthesis. Catalyzes the initial step of the lipid cycle reactions in the biosynthesis of the cell wall peptidoglycan: transfers peptidoglycan precursor phospho-MurNAc-pentapeptide from UDP-MurNAc-pentapeptide onto the lipid carrier undecaprenyl phosphate, yielding undecaprenyl-pyrophosphoryl-MurNAc-pentapeptide, known as lipid I. In Borrelia garinii subsp. bavariensis (strain ATCC BAA-2496 / DSM 23469 / PBi) (Borreliella bavariensis), this protein is Phospho-N-acetylmuramoyl-pentapeptide-transferase.